Consider the following 319-residue polypeptide: RWD domain-containing protein 2B (319 aa).

One can recognise an RWD domain in the interval 41–165 (SELDLLASMF…EWVREHASGY (125 aa)). Ser275 is modified (phosphoserine).

In Pongo abelii (Sumatran orangutan), this protein is RWD domain-containing protein 2B (RWDD2B).